The chain runs to 102 residues: Small ribosomal subunit protein uS10 (102 aa).

The protein belongs to the universal ribosomal protein uS10 family. In terms of assembly, part of the 30S ribosomal subunit.

In terms of biological role, involved in the binding of tRNA to the ribosomes. This Paramagnetospirillum magneticum (strain ATCC 700264 / AMB-1) (Magnetospirillum magneticum) protein is Small ribosomal subunit protein uS10.